A 1530-amino-acid chain; its full sequence is Coiled-coil domain-containing protein 141 (1530 aa).

Residues 49 to 127 (NLLEIGSSQD…SMLERRRELL (79 aa)) form a Spectrin repeat. Thr-91 is modified (phosphothreonine). 3 coiled-coil regions span residues 220–251 (IDSLLELLQDRRRQLDKHLQQQRQELSQVLQL), 758–785 (LKEKAEQLKDLIHLHQRQRERIQEYEEI), and 865–967 (AKSL…VNKK). Disordered regions lie at residues 1153 to 1240 (SEER…PASS), 1259 to 1285 (LGKAPESVLPPPTAFTDGYHNKKDTFT), 1324 to 1356 (PREVHDKALPPSSQAQEISLGTQEKVHADSNVT), and 1369 to 1403 (SPGLSSQSDTSRSHQRQVGPQGDRKNSSAEKSVVS). Positions 1334 to 1345 (PSSQAQEISLGT) are enriched in polar residues. Residues 1409-1497 (PHFSRLLSNV…GTLSSKAILH (89 aa)) form the Ig-like domain.

In terms of assembly, interacts with DISC1. Interacts preferentially with phosphorylated forms of myosin regulatory light chain (MRLC). Interacts (via the N-terminal region) with HDAC6; inhibits the deacetylase activity of HDAC6. Interacts with KIBRA (via the C-terminal region); retains AMPAR in the cytosol after internalization. Post-translationally, ubiquitinated and degradated by the CDC20-APC/C pathway. During brain development, CDC20-APC/C complex degrades CCDC141 after centrosome translocation into the dilated area. CCDC141 is restabilized in the dilation until the centrosome enters the dilation, at which point it is once again immediately destabilized by CDC20-APC/C complex. The oscillatory regulation of CCDC141 protein is needed for proper cortical migration. Phosphorylation at Thr-91 by PLK1 affects CCDC141 degradation.

It is found in the cytoplasm. The protein localises to the cytoskeleton. Its subcellular location is the microtubule organizing center. It localises to the centrosome. In terms of biological role, plays a critical role in cortical radial and GnRH neurons migration during brain development. Regulates cortical radial migration by negatively controlling the activity of histone deacetylase 6 (HDAC6) and promotes centrosome maturation. CAMDI is required for dilation formation of cortical neurons during radial migration. Plays a critical role in learning and memory performance through regulation of AMPA-selective glutamate receptors (AMPARs) cell surface expression in competition with KIBRA. The protein is Coiled-coil domain-containing protein 141 of Rattus norvegicus (Rat).